Consider the following 253-residue polypeptide: BRI3-binding protein (253 aa).

A run of 4 helical transmembrane segments spans residues 19-39 (VLLPVLLLALLLLALVAPGAQ), 131-151 (ALVLVGVVLLAYWFLSLTLGF), 164-181 (FWLVRVILFSMSCVYILH), and 190-210 (AVLPLCVVVAIYFMTGPMGYW). Residues 219-253 (SPSVEEKLEHLENQVRLLNIRLNRVLENLDRSKDK) adopt a coiled-coil conformation. Phosphoserine is present on Ser250.

As to quaternary structure, interacts with LETMD1. Interacts with BRI3. Interacts with BRI3; the interaction is weak. Interacts with TMEM238L.

It localises to the mitochondrion outer membrane. Involved in tumorigenesis and may function by stabilizing p53/TP53. This is BRI3-binding protein from Mus musculus (Mouse).